The following is a 323-amino-acid chain: uncharacterized protein (323 aa).

This is an uncharacterized protein from Thermotoga maritima (strain ATCC 43589 / DSM 3109 / JCM 10099 / NBRC 100826 / MSB8).